We begin with the raw amino-acid sequence, 250 residues long: Small ribosomal subunit protein uS3 (250 aa).

The KH type-2 domain occupies Val39–Asp107. The segment at Val214 to Glu250 is disordered. Residues Gln220–Glu250 are compositionally biased toward basic and acidic residues.

This sequence belongs to the universal ribosomal protein uS3 family. As to quaternary structure, part of the 30S ribosomal subunit. Forms a tight complex with proteins S10 and S14.

In terms of biological role, binds the lower part of the 30S subunit head. Binds mRNA in the 70S ribosome, positioning it for translation. The chain is Small ribosomal subunit protein uS3 from Acinetobacter baylyi (strain ATCC 33305 / BD413 / ADP1).